The chain runs to 353 residues: ATP-dependent (S)-NAD(P)H-hydrate dehydratase (353 aa).

The YjeF C-terminal domain maps to M18 to L345. The tract at residues R95–P121 is disordered. The span at S96–K114 shows a compositional bias: low complexity. Residues G143 and N196–R202 each bind (6S)-NADPHX. ATP contacts are provided by residues K241–D245 and G260–G269. D270 contributes to the (6S)-NADPHX binding site.

Belongs to the NnrD/CARKD family. It depends on Mg(2+) as a cofactor.

The protein resides in the cytoplasm. The enzyme catalyses (6S)-NADHX + ATP = ADP + phosphate + NADH + H(+). The catalysed reaction is (6S)-NADPHX + ATP = ADP + phosphate + NADPH + H(+). Catalyzes the dehydration of the S-form of NAD(P)HX at the expense of ATP, which is converted to ADP. Together with NAD(P)HX epimerase, which catalyzes the epimerization of the S- and R-forms, the enzyme allows the repair of both epimers of NAD(P)HX, a damaged form of NAD(P)H that is a result of enzymatic or heat-dependent hydration. The chain is ATP-dependent (S)-NAD(P)H-hydrate dehydratase from Neurospora crassa (strain ATCC 24698 / 74-OR23-1A / CBS 708.71 / DSM 1257 / FGSC 987).